The chain runs to 358 residues: Heme A synthase (358 aa).

Transmembrane regions (helical) follow at residues I22–A42, I107–K127, I139–I159, A173–F193, F208–G228, F269–V289, A302–R322, and V324–V344. Residue H271 coordinates heme. H332 provides a ligand contact to heme.

Belongs to the COX15/CtaA family. Type 2 subfamily. Interacts with CtaB. Heme b is required as a cofactor.

The protein resides in the cell membrane. It catalyses the reaction Fe(II)-heme o + 2 A + H2O = Fe(II)-heme a + 2 AH2. It functions in the pathway porphyrin-containing compound metabolism; heme A biosynthesis; heme A from heme O: step 1/1. Its function is as follows. Catalyzes the conversion of heme O to heme A by two successive hydroxylations of the methyl group at C8. The first hydroxylation forms heme I, the second hydroxylation results in an unstable dihydroxymethyl group, which spontaneously dehydrates, resulting in the formyl group of heme A. The protein is Heme A synthase of Bartonella quintana (strain Toulouse) (Rochalimaea quintana).